We begin with the raw amino-acid sequence, 337 residues long: Deoxyhypusine hydroxylase (337 aa).

HEAT-like PBS-type repeat units lie at residues 73-99 (LKHELAYCLGQTGNTAAVKPLRQVLSD) and 106-132 (CRHEAAEALGALGWADNLDILREYRDR). 4 residues coordinate Fe cation: histidine 75, glutamate 76, histidine 108, and glutamate 109. Basic and acidic residues predominate over residues 156–165 (AERQKEKLRP). Residues 156 to 183 (AERQKEKLRPSDFASIDPAPPMPESDKE) are disordered. 3 HEAT-like PBS-type repeats span residues 202–235 (SRYRAMFALRDLASPPDLPTATPAVLALAKGLSD), 240–266 (FRHEIAFVFGQLSHPASIPALTEALSN), and 273–300 (VRHEAAEALGSLGEKDGVEDTLRKFLHD). Residues histidine 242, glutamate 243, histidine 275, and glutamate 276 each contribute to the Fe cation site.

This sequence belongs to the deoxyhypusine hydroxylase family. Requires Fe(2+) as cofactor.

It localises to the cytoplasm. It is found in the nucleus. It catalyses the reaction [eIF5A protein]-deoxyhypusine + AH2 + O2 = [eIF5A protein]-hypusine + A + H2O. The protein operates within protein modification; eIF5A hypusination. In terms of biological role, catalyzes the hydroxylation of the N(6)-(4-aminobutyl)-L-lysine intermediate to form hypusine, an essential post-translational modification only found in mature eIF-5A factor. This chain is Deoxyhypusine hydroxylase, found in Gibberella zeae (strain ATCC MYA-4620 / CBS 123657 / FGSC 9075 / NRRL 31084 / PH-1) (Wheat head blight fungus).